The primary structure comprises 160 residues: MLNDKIKELITPTAKALGYKVINVNFVVKPAILKIVIDRFDEKKVKVLDCQAFSKAISAVLDVENIIPGKYFLEVESAGIERSLMDLEDFIKFLGYTIQVKLVAAINENKKYIGVISNIKGQEITLNLQNDSTIAIDYDNIKVAKIVFTDEMFRQITKNY.

It belongs to the RimP family.

Its subcellular location is the cytoplasm. Its function is as follows. Required for maturation of 30S ribosomal subunits. This is Ribosome maturation factor RimP from Orientia tsutsugamushi (strain Ikeda) (Rickettsia tsutsugamushi).